We begin with the raw amino-acid sequence, 1109 residues long: Carbamoyl phosphate synthase large chain (1109 aa).

A carboxyphosphate synthetic domain region spans residues 1 to 402 (MPRRTDLTSV…ALQKAMRSID (402 aa)). Positions 129, 169, 175, 176, 208, 210, 215, 241, 242, 243, 285, and 299 each coordinate ATP. The 196-residue stretch at 133 to 328 (KGVVERCGAE…IAKIAARLAV (196 aa)) folds into the ATP-grasp 1 domain. Residues Gln285, Glu299, and Asn301 each coordinate Mg(2+). Positions 285, 299, and 301 each coordinate Mn(2+). The interval 403–548 (KAGSTFHWRG…YHYSSYDAET (146 aa)) is oligomerization domain. The segment at 549–956 (EVQPRDRPAV…AFAKSQAAAY (408 aa)) is carbamoyl phosphate synthetic domain. The ATP-grasp 2 domain maps to 678–876 (GEVLVAAGLP…LAKAASLLMA (199 aa)). The ATP site is built by Arg714, Arg760, Leu762, Glu767, Gly792, Ile793, His794, Ser795, Gln835, and Glu847. Residues Gln835, Glu847, and Asn849 each contribute to the Mg(2+) site. Mn(2+) contacts are provided by Gln835, Glu847, and Asn849. Positions 957 to 1102 (GGLPTSGRVF…QEHDAARAAR (146 aa)) constitute an MGS-like domain. The interval 957–1109 (GGLPTSGRVF…AARETEGVHA (153 aa)) is allosteric domain.

It belongs to the CarB family. In terms of assembly, composed of two chains; the small (or glutamine) chain promotes the hydrolysis of glutamine to ammonia, which is used by the large (or ammonia) chain to synthesize carbamoyl phosphate. Tetramer of heterodimers (alpha,beta)4. Mg(2+) is required as a cofactor. The cofactor is Mn(2+).

The catalysed reaction is hydrogencarbonate + L-glutamine + 2 ATP + H2O = carbamoyl phosphate + L-glutamate + 2 ADP + phosphate + 2 H(+). It carries out the reaction hydrogencarbonate + NH4(+) + 2 ATP = carbamoyl phosphate + 2 ADP + phosphate + 2 H(+). It functions in the pathway amino-acid biosynthesis; L-arginine biosynthesis; carbamoyl phosphate from bicarbonate: step 1/1. Its pathway is pyrimidine metabolism; UMP biosynthesis via de novo pathway; (S)-dihydroorotate from bicarbonate: step 1/3. Large subunit of the glutamine-dependent carbamoyl phosphate synthetase (CPSase). CPSase catalyzes the formation of carbamoyl phosphate from the ammonia moiety of glutamine, carbonate, and phosphate donated by ATP, constituting the first step of 2 biosynthetic pathways, one leading to arginine and/or urea and the other to pyrimidine nucleotides. The large subunit (synthetase) binds the substrates ammonia (free or transferred from glutamine from the small subunit), hydrogencarbonate and ATP and carries out an ATP-coupled ligase reaction, activating hydrogencarbonate by forming carboxy phosphate which reacts with ammonia to form carbamoyl phosphate. This chain is Carbamoyl phosphate synthase large chain, found in Beutenbergia cavernae (strain ATCC BAA-8 / DSM 12333 / CCUG 43141 / JCM 11478 / NBRC 16432 / NCIMB 13614 / HKI 0122).